A 66-amino-acid chain; its full sequence is Small ribosomal subunit protein bS21 (66 aa).

This sequence belongs to the bacterial ribosomal protein bS21 family.

This chain is Small ribosomal subunit protein bS21, found in Rickettsia akari (strain Hartford).